The chain runs to 45 residues: Bacteriocin fulvocin-C (45 aa).

Functionally, bacteriocin. This chain is Bacteriocin fulvocin-C, found in Myxococcus fulvus.